Consider the following 322-residue polypeptide: tRNA-specific adenosine deaminase subunit TAD3 (322 aa).

The region spanning Glu-162–Leu-283 is the CMP/dCMP-type deaminase domain. Zn(2+) is bound by residues His-216, Cys-254, Cys-257, and Cys-322.

It belongs to the cytidine and deoxycytidylate deaminase family. ADAT3 subfamily. As to quaternary structure, heterodimer with TAD2.

It localises to the cytoplasm. Its subcellular location is the nucleus. It is found in the peroxisome. Functionally, structural subunit of tRNA-specific adenosine deaminase, which deaminates adenosine-34 (the first, also called wobble position of the anticodon) to inosine in many tRNAs. Inosine-34 allows the decoding of 3 different nucleotides at the third position of mRNA codons, as inosine is able to pair with U, C, and A. The protein is tRNA-specific adenosine deaminase subunit TAD3 (TAD3) of Saccharomyces cerevisiae (strain ATCC 204508 / S288c) (Baker's yeast).